A 296-amino-acid polypeptide reads, in one-letter code: Acetylglutamate kinase (296 aa).

Substrate-binding positions include 68-69 (GG), Arg-90, and Asn-193.

This sequence belongs to the acetylglutamate kinase family. ArgB subfamily.

It is found in the cytoplasm. It catalyses the reaction N-acetyl-L-glutamate + ATP = N-acetyl-L-glutamyl 5-phosphate + ADP. It functions in the pathway amino-acid biosynthesis; L-arginine biosynthesis; N(2)-acetyl-L-ornithine from L-glutamate: step 2/4. Catalyzes the ATP-dependent phosphorylation of N-acetyl-L-glutamate. The chain is Acetylglutamate kinase from Acidothermus cellulolyticus (strain ATCC 43068 / DSM 8971 / 11B).